We begin with the raw amino-acid sequence, 443 residues long: Tubulin epsilon and delta complex protein 2 (443 aa).

The stretch at 8 to 33 (RRLVAELRDALDSCAERQRQLEQSLR) forms a coiled coil. 2 disordered regions span residues 45–72 (AETP…PSPQ) and 93–146 (GLSK…PWVP). The segment covering 106–124 (LKSGSASTATKASAPPSTS) has biased composition (low complexity).

In terms of assembly, interacts with TEDC1. Found in a complex with TEDC1, TEDC2, TUBE1 and TUBD1.

It is found in the cell projection. Its subcellular location is the cilium. The protein localises to the cytoplasm. The protein resides in the cytoskeleton. It localises to the microtubule organizing center. It is found in the centrosome. Its subcellular location is the centriole. Functionally, acts as a positive regulator of ciliary hedgehog signaling. Required for centriole stability. This is Tubulin epsilon and delta complex protein 2 from Bos taurus (Bovine).